Here is a 542-residue protein sequence, read N- to C-terminus: Esterase 6 (542 aa).

The N-terminal stretch at 1–19 is a signal peptide; the sequence is MNYVGLIIVLSCLWLGSNA. A glycan (N-linked (GlcNAc...) asparagine) is linked at Asn40. A disulfide bridge links Cys84 with Cys103. Ser207 functions as the Acyl-ester intermediate in the catalytic mechanism. Residues Cys259 and Cys271 are joined by a disulfide bond. N-linked (GlcNAc...) asparagine glycosylation is found at Asn418 and Asn454. His464 serves as the catalytic Charge relay system. An intrachain disulfide couples Cys512 to Cys533.

This sequence belongs to the type-B carboxylesterase/lipase family. As to quaternary structure, monomer.

It is found in the secreted. It carries out the reaction a carboxylic ester + H2O = an alcohol + a carboxylate + H(+). In terms of biological role, transferred from the ejaculatory bulbs of males to the female genitals upon copulation, plays an important role in the reproductive biology. This chain is Esterase 6 (Est-6), found in Drosophila simulans (Fruit fly).